The chain runs to 713 residues: MSRPGPKPAASSRPRRGAAASHTQEHVNEKNIGSSSKPAEKKGSDEVTASSAATGTSPRMSTTGAKAVKIESEKSQSSEPPVIHEKKPKGKPKEGSEPQTLPKHASDTGSKHAHKEKALSRSNEQIVSEKSSESKTKFQDAPSADGESVAGGVTVATASDKVVVKKKEKKSLTPTLPMESTLNKLSDKSGVNAALDDLIDTLGECEDTNKDDPPYTGPVVLDPMDSTYLEALGIKEGTIPPEYRKLLEKNEAITGPLPDSPKPMGIDHAIDALSSDFTCSSPTGKQTEKEKSTGESSKAQSAGVTRSAVPPQEKKRKVEEEVMNDQALQALSDSLGTRQPDPQSHLRQAKQVKEAKAKEERQEKCGEDEDTVPAEYRLKPAKDKDGKPLLPEPEETSKCLSESELIGELSADFVQPTYQEKPSMPAAKIKKGVVPDDAVETLARSLGTRKEDPEDEKSLVDKVKEKAKEEDHEKLGEKEETIPPDYRLEIVKDKDGKPLLPKEAEEQLPPLSDDFLLDALSQDFSSPANILSLGFEDAKLSAAVSETVSQVPAPSNHTAAPPPGTERRDKELDDALDELSDSLGQRQPDPDENKPLDDKVKEKIKAEHSEKLGERDDTIPPEYRHLLDNDGKDKPEKPLTKNTEKLGQDQDPIDALSEDLDSCPPTTETSQNTTKEKGKKTSSSKASKNEEKTKDSSKKTEEVPKPKVDEDAT.

Low complexity predominate over residues 1–21; it reads MSRPGPKPAASSRPRRGAAAS. Residues 1–152 are disordered; the sequence is MSRPGPKPAA…SADGESVAGG (152 aa). The segment covering 47-64 has biased composition (polar residues); sequence VTASSAATGTSPRMSTTG. Ser57 bears the Phosphoserine mark. Lys69 participates in a covalent cross-link: Glycyl lysine isopeptide (Lys-Gly) (interchain with G-Cter in SUMO2). N6-acetyllysine is present on Lys86. The span at 120-129 shows a compositional bias: polar residues; the sequence is SRSNEQIVSE. 2 positions are modified to phosphoserine: Ser122 and Ser171. Thr173 carries the phosphothreonine modification. An Inhibitory domain 1 repeat occupies 208-260; sequence TNKDDPPYTGPVVLDPMDSTYLEALGIKEGTIPPEYRKLLEKNEAITGPLPDS. A disordered region spans residues 253 to 402; sequence ITGPLPDSPK…PEETSKCLSE (150 aa). Ser260 and Ser281 each carry phosphoserine. Polar residues-rich tracts occupy residues 275–285, 294–304, and 326–346; these read SDFTCSSPTGK, GESSKAQSAGV, and QALQALSDSLGTRQPDPQSHL. An Inhibitory domain 2 repeat occupies 341–393; the sequence is DPQSHLRQAKQVKEAKAKEERQEKCGEDEDTVPAEYRLKPAKDKDGKPLLPEP. Basic and acidic residues-rich tracts occupy residues 351–365 and 376–387; these read QVKEAKAKEERQEKC and YRLKPAKDKDGK. Residues Ser401, Ser403, Ser410, and Ser445 each carry the phosphoserine modification. Positions 442-507 are disordered; the sequence is LARSLGTRKE…PLLPKEAEEQ (66 aa). The span at 448 to 505 shows a compositional bias: basic and acidic residues; that stretch reads TRKEDPEDEKSLVDKVKEKAKEEDHEKLGEKEETIPPDYRLEIVKDKDGKPLLPKEAE. The stretch at 451–504 is one Inhibitory domain 3 repeat; that stretch reads EDPEDEKSLVDKVKEKAKEEDHEKLGEKEETIPPDYRLEIVKDKDGKPLLPKEA. 2 positions are modified to phosphoserine: Ser521 and Ser532. Over residues 544–558 the composition is skewed to polar residues; it reads VSETVSQVPAPSNHT. The interval 544 to 713 is disordered; that stretch reads VSETVSQVPA…PKPKVDEDAT (170 aa). 2 positions are modified to phosphoserine: Ser580 and Ser582. Residues 588–641 form an Inhibitory domain 4 repeat; sequence PDPDENKPLDDKVKEKIKAEHSEKLGERDDTIPPEYRHLLDNDGKDKPEKPLTK. 2 stretches are compositionally biased toward basic and acidic residues: residues 588-648 and 687-713; these read PDPD…KLGQ and SKNEEKTKDSSKKTEEVPKPKVDEDAT.

It belongs to the protease inhibitor I27 (calpastatin) family.

In terms of biological role, specific inhibition of calpain (calcium-dependent cysteine protease). Plays a key role in postmortem tenderization of meat and have been proposed to be involved in muscle protein degradation in living tissue. In Rattus norvegicus (Rat), this protein is Calpastatin (Cast).